Reading from the N-terminus, the 198-residue chain is Outer-membrane lipoprotein carrier protein (198 aa).

The signal sequence occupies residues 1 to 17 (MKKILLSLCFLSSVAFA).

Belongs to the LolA family. In terms of assembly, monomer.

It localises to the periplasm. In terms of biological role, participates in the translocation of lipoproteins from the inner membrane to the outer membrane. Only forms a complex with a lipoprotein if the residue after the N-terminal Cys is not an aspartate (The Asp acts as a targeting signal to indicate that the lipoprotein should stay in the inner membrane). This Aliivibrio salmonicida (strain LFI1238) (Vibrio salmonicida (strain LFI1238)) protein is Outer-membrane lipoprotein carrier protein.